Here is a 93-residue protein sequence, read N- to C-terminus: Small ribosomal subunit protein uS19 (93 aa).

Belongs to the universal ribosomal protein uS19 family.

Protein S19 forms a complex with S13 that binds strongly to the 16S ribosomal RNA. This is Small ribosomal subunit protein uS19 from Dehalococcoides mccartyi (strain ATCC BAA-2266 / KCTC 15142 / 195) (Dehalococcoides ethenogenes (strain 195)).